Consider the following 420-residue polypeptide: Probable pectate lyase C (420 aa).

Residues 1–20 (MKLSEPLLVSLAAFSQAVTA) form the signal peptide. N-linked (GlcNAc...) asparagine glycosylation is found at asparagine 49, asparagine 165, and asparagine 202. Arginine 205 is a catalytic residue. The 36-residue stretch at 262-297 (NANFHGYVQNNYYDPDKDGQLDGFELGVSSSNYGGM) folds into the EF-hand domain. 5 residues coordinate Ca(2+): aspartate 275, aspartate 277, aspartate 279, glutamine 281, and glutamate 286. The tract at residues 358 to 396 (TMGGPGTLNGGTPAKDTDGDGIPDEAEKQLGTDPNTNDS) is disordered. A glycan (N-linked (GlcNAc...) asparagine) is linked at asparagine 394.

It belongs to the polysaccharide lyase 1 family. Requires Ca(2+) as cofactor.

The protein localises to the secreted. It catalyses the reaction Eliminative cleavage of (1-&gt;4)-alpha-D-galacturonan to give oligosaccharides with 4-deoxy-alpha-D-galact-4-enuronosyl groups at their non-reducing ends.. Its function is as follows. Pectinolytic enzyme consist of four classes of enzymes: pectin lyase, polygalacturonase, pectin methylesterase and rhamnogalacturonase. Among pectinolytic enzymes, pectin lyase is the most important in depolymerization of pectin, since it cleaves internal glycosidic bonds of highly methylated pectins. Favors pectate, the anion, over pectin, the methyl ester. This is Probable pectate lyase C (plyC) from Aspergillus fumigatus (strain ATCC MYA-4609 / CBS 101355 / FGSC A1100 / Af293) (Neosartorya fumigata).